A 365-amino-acid chain; its full sequence is MFKALAGIVLALVATLAHAERIRDLTSVQGVRENSLIGYGLVVGLDGTGDQTTQTPFTTQTLNNMLSQLGITVPTGTNMQLKNVAAVMVTASYPPFARQGQTIDVVVSSMGNAKSLRGGTLLMTPLKGVDSQVYALAQGNILVGGAGASAGGSSVQVNQLNGGRITNGAIIERELPTQFGAGNTINLQLNDEDFTMAQQITDAINRARGYGSATALDARTVQVRVPSGNSSQVRFLADIQNMEVNVTPQDAKVVINSRTGSVVMNREVTLDSCAVAQGNLSVTVNRQLNVNQPNTPFGGGQTVVTPQTQIDLRQSGGSLQSVRSSANLNSVVRALNALGATPMDLMSILQSMQSAGCLRAKLEII.

A signal peptide spans 1–19; the sequence is MFKALAGIVLALVATLAHA.

The protein belongs to the FlgI family. The basal body constitutes a major portion of the flagellar organelle and consists of four rings (L,P,S, and M) mounted on a central rod.

The protein localises to the periplasm. It is found in the bacterial flagellum basal body. In terms of biological role, assembles around the rod to form the L-ring and probably protects the motor/basal body from shearing forces during rotation. The sequence is that of Flagellar P-ring protein from Salmonella heidelberg (strain SL476).